Consider the following 246-residue polypeptide: Aquaporin AqpM (246 aa).

Over 1–11 (MVSLTKRCIAE) the chain is Cytoplasmic. The chain crosses the membrane as a helical span at residues 12-32 (FIGTFILVFFGAGSAAVTLMI). The Extracellular segment spans residues 33 to 55 (ASGGTSPNPFNIGIGLLGGLGDW). A helical membrane pass occupies residues 56 to 76 (VAIGLAFGFAIAASIYALGNI). The Cytoplasmic portion of the chain corresponds to 77 to 103 (SGCHINPAVTIGLWSVKKFPGREVVPY). The short motif at 82–84 (NPA) is the NPA 1 element. Residues 104–124 (IIAQLLGAAFGSFIFLQCAGI) traverse the membrane as a helical segment. Residues 125–145 (GAATVGGLGATAPFPGISYWQ) are Extracellular-facing. Residues 146–166 (AMLAEVVGTFLLMITIMGIAV) form a helical membrane-spanning segment. The Cytoplasmic portion of the chain corresponds to 167-172 (DERAPK). A helical transmembrane segment spans residues 173-193 (GFAGIIIGLTVAGIITTLGNI). Topologically, residues 194–217 (SGSSLNPARTFGPYLNDMIFAGTN) are extracellular. An NPA 2 motif is present at residues 199-201 (NPA). The chain crosses the membrane as a helical span at residues 218–238 (LWNYYPIYVIGPIVGAVLAAL). At 239–246 (TYQYLTSE) the chain is on the cytoplasmic side.

Belongs to the MIP/aquaporin (TC 1.A.8) family. In terms of assembly, homotetramer.

It localises to the cell membrane. In terms of biological role, channel that permits osmotically driven movement of water in both directions. It mediates rapid entry or exit of water in response to abrupt changes in osmolarity. Also exhibits a transient but reproducible increase in the initial glycerol flux. This Methanothermobacter marburgensis (strain ATCC BAA-927 / DSM 2133 / JCM 14651 / NBRC 100331 / OCM 82 / Marburg) (Methanobacterium thermoautotrophicum) protein is Aquaporin AqpM (aqpM).